Consider the following 240-residue polypeptide: MTREEAIKKIIFAMDVKEFSDVQYWAELLSQHVGMFKVGKQLYTACGPAAVRMIQKCGGEVFLDLKYHDIPNTVAMATLEAANLGVQLCDLHAMGGYEMMNKTMETLDKNFSGCTARPKVLAITVLTSSNEETLRGIGIELPVPEMVVKLAKLAKSAGVDGVVASPQEVELIREACGKDFLVVTPGVRPSFASADDQKRIMSPAEAVKAGADYLVIGRPIAAAQSPVEAAQKIVDEIVAG.

Residues D15, K37, 64-73, T127, R188, Q197, G217, and R218 each bind substrate; that span reads DLKYHDIPNT. K66 serves as the catalytic Proton donor.

Belongs to the OMP decarboxylase family. Type 1 subfamily. In terms of assembly, homodimer.

The enzyme catalyses orotidine 5'-phosphate + H(+) = UMP + CO2. The protein operates within pyrimidine metabolism; UMP biosynthesis via de novo pathway; UMP from orotate: step 2/2. Functionally, catalyzes the decarboxylation of orotidine 5'-monophosphate (OMP) to uridine 5'-monophosphate (UMP). This chain is Orotidine 5'-phosphate decarboxylase, found in Citrifermentans bemidjiense (strain ATCC BAA-1014 / DSM 16622 / JCM 12645 / Bem) (Geobacter bemidjiensis).